We begin with the raw amino-acid sequence, 483 residues long: Glutamyl-tRNA(Gln) amidotransferase subunit A (483 aa).

Active-site charge relay system residues include Lys-76 and Ser-151. Ser-175 serves as the catalytic Acyl-ester intermediate.

This sequence belongs to the amidase family. GatA subfamily. Heterotrimer of A, B and C subunits.

It carries out the reaction L-glutamyl-tRNA(Gln) + L-glutamine + ATP + H2O = L-glutaminyl-tRNA(Gln) + L-glutamate + ADP + phosphate + H(+). Allows the formation of correctly charged Gln-tRNA(Gln) through the transamidation of misacylated Glu-tRNA(Gln) in organisms which lack glutaminyl-tRNA synthetase. The reaction takes place in the presence of glutamine and ATP through an activated gamma-phospho-Glu-tRNA(Gln). This Pseudomonas putida (strain W619) protein is Glutamyl-tRNA(Gln) amidotransferase subunit A.